We begin with the raw amino-acid sequence, 484 residues long: ATP synthase subunit beta (484 aa).

156–163 (GGAGVGKT) contacts ATP.

The protein belongs to the ATPase alpha/beta chains family. As to quaternary structure, F-type ATPases have 2 components, CF(1) - the catalytic core - and CF(0) - the membrane proton channel. CF(1) has five subunits: alpha(3), beta(3), gamma(1), delta(1), epsilon(1). CF(0) has three main subunits: a(1), b(2) and c(9-12). The alpha and beta chains form an alternating ring which encloses part of the gamma chain. CF(1) is attached to CF(0) by a central stalk formed by the gamma and epsilon chains, while a peripheral stalk is formed by the delta and b chains.

The protein resides in the cell inner membrane. The catalysed reaction is ATP + H2O + 4 H(+)(in) = ADP + phosphate + 5 H(+)(out). Its function is as follows. Produces ATP from ADP in the presence of a proton gradient across the membrane. The catalytic sites are hosted primarily by the beta subunits. The chain is ATP synthase subunit beta from Rhizorhabdus wittichii (strain DSM 6014 / CCUG 31198 / JCM 15750 / NBRC 105917 / EY 4224 / RW1) (Sphingomonas wittichii).